Reading from the N-terminus, the 69-residue chain is Putative membrane protein insertion efficiency factor (69 aa).

The protein belongs to the UPF0161 family.

It is found in the cell inner membrane. Functionally, could be involved in insertion of integral membrane proteins into the membrane. The polypeptide is Putative membrane protein insertion efficiency factor (Syntrophotalea carbinolica (strain DSM 2380 / NBRC 103641 / GraBd1) (Pelobacter carbinolicus)).